The following is a 157-amino-acid chain: Small ribosomal subunit protein uS7 (157 aa).

It belongs to the universal ribosomal protein uS7 family. As to quaternary structure, part of the 30S ribosomal subunit. Contacts proteins S9 and S11.

One of the primary rRNA binding proteins, it binds directly to 16S rRNA where it nucleates assembly of the head domain of the 30S subunit. Is located at the subunit interface close to the decoding center, probably blocks exit of the E-site tRNA. This Francisella philomiragia subsp. philomiragia (strain ATCC 25017 / CCUG 19701 / FSC 153 / O#319-036) protein is Small ribosomal subunit protein uS7.